Reading from the N-terminus, the 660-residue chain is tRNA 5-methylaminomethyl-2-thiouridine biosynthesis bifunctional protein MnmC (660 aa).

The tRNA (mnm(5)s(2)U34)-methyltransferase stretch occupies residues 1 to 233; that stretch reads MTHSHAQLVW…KRHISHGWIA (233 aa). Residues 260–660 form an FAD-dependent cmnm(5)s(2)U34 oxidoreductase region; it reads VGGGLAGAAS…IRRKLDPDAL (401 aa).

The protein in the N-terminal section; belongs to the methyltransferase superfamily. tRNA (mnm(5)s(2)U34)-methyltransferase family. In the C-terminal section; belongs to the DAO family. FAD serves as cofactor.

It is found in the cytoplasm. The catalysed reaction is 5-aminomethyl-2-thiouridine(34) in tRNA + S-adenosyl-L-methionine = 5-methylaminomethyl-2-thiouridine(34) in tRNA + S-adenosyl-L-homocysteine + H(+). Its function is as follows. Catalyzes the last two steps in the biosynthesis of 5-methylaminomethyl-2-thiouridine (mnm(5)s(2)U) at the wobble position (U34) in tRNA. Catalyzes the FAD-dependent demodification of cmnm(5)s(2)U34 to nm(5)s(2)U34, followed by the transfer of a methyl group from S-adenosyl-L-methionine to nm(5)s(2)U34, to form mnm(5)s(2)U34. In Chromobacterium violaceum (strain ATCC 12472 / DSM 30191 / JCM 1249 / CCUG 213 / NBRC 12614 / NCIMB 9131 / NCTC 9757 / MK), this protein is tRNA 5-methylaminomethyl-2-thiouridine biosynthesis bifunctional protein MnmC.